A 475-amino-acid chain; its full sequence is UDP-glycosyltransferase 1 (475 aa).

His-15 functions as the Proton acceptor in the catalytic mechanism. An an anthocyanidin-binding site is contributed by His-15. The Charge relay role is filled by Asp-117. Ala-345, Gln-347, His-362, Trp-365, Asn-366, Ser-367, and Glu-370 together coordinate UDP-alpha-D-glucose. Gly-385 serves as a coordination point for an anthocyanidin. Glu-386 and Gln-387 together coordinate UDP-alpha-D-glucose.

The protein belongs to the UDP-glycosyltransferase family. Mostly expressed in leaves and flowers, and, to a lower extent, in roots and stems.

The enzyme catalyses (20S)-protopanaxadiol + UDP-alpha-D-glucose = (20S)-ginsenoside C-K + UDP + H(+). The catalysed reaction is (20S)-ginsenoside Rg3 + UDP-alpha-D-glucose = (20S)-ginsenoside Rd + UDP + H(+). It catalyses the reaction (20S)-ginsenoside Rh2 + UDP-alpha-D-glucose = (20S)-ginsenoside F2 + UDP + H(+). It carries out the reaction (20S)-protopanaxatriol + UDP-alpha-D-glucose = (20S)-ginsenoside F1 + UDP + H(+). The enzyme catalyses dammarenediol-II + UDP-alpha-D-glucose = (20S)-20-O-(beta-D-glucosyl)-3-hydroxydammarene + UDP + H(+). The protein operates within secondary metabolite biosynthesis; terpenoid biosynthesis. Component of the dammarane-type triterpene saponins (e.g. ginsenosides or panaxosides) biosynthetic pathway. Glycosyltransferase that catalyzes the biosynthesis of ginsenoside F1 from protopanaxatriol (PPT). Triggers C20-OH glycosylation of ginsenoside Rg3 to produce ginsenoside Rd. Mediates the conversion of protopanaxadiol (PPD) to the ginsenoside compound K. catalyzes the production of 20S-O-beta-(D-glucosyl)-dammarenediol II form dammarenediol II (DM). This chain is UDP-glycosyltransferase 1, found in Panax ginseng (Korean ginseng).